We begin with the raw amino-acid sequence, 343 residues long: GTPase Obg (343 aa).

One can recognise an Obg domain in the interval 1-159 (MKFVDSASIF…LQLDMELKLM (159 aa)). Residues 121-144 (GHGGRGNQHFATSTNQAPRRSEPG) form a disordered region. The segment covering 129 to 138 (HFATSTNQAP) has biased composition (polar residues). Residues 160–323 (ADVGLVGFPN…LKDELWREVS (164 aa)) form the OBG-type G domain. Residues 166–173 (GFPNAGKS), 191–195 (FTTLV), 213–216 (DIPG), 280–283 (TKMD), and 304–306 (SSV) each bind GTP. Residues S173 and T193 each contribute to the Mg(2+) site. A disordered region spans residues 322–343 (VSMRDRPEESSDPEGEGDGGTP). Residues 331–343 (SSDPEGEGDGGTP) show a composition bias toward acidic residues.

It belongs to the TRAFAC class OBG-HflX-like GTPase superfamily. OBG GTPase family. In terms of assembly, monomer. The cofactor is Mg(2+).

The protein resides in the cytoplasm. Its function is as follows. An essential GTPase which binds GTP, GDP and possibly (p)ppGpp with moderate affinity, with high nucleotide exchange rates and a fairly low GTP hydrolysis rate. Plays a role in control of the cell cycle, stress response, ribosome biogenesis and in those bacteria that undergo differentiation, in morphogenesis control. The polypeptide is GTPase Obg (Chlorobium luteolum (strain DSM 273 / BCRC 81028 / 2530) (Pelodictyon luteolum)).